Reading from the N-terminus, the 83-residue chain is Small ribosomal subunit protein eS21 (83 aa).

This sequence belongs to the eukaryotic ribosomal protein eS21 family. Component of the 40S small ribosomal subunit. Interacts with sta.

It localises to the cytoplasm. It is found in the cytosol. The protein localises to the rough endoplasmic reticulum. Functionally, may be an associated component of the ribosome rather than a core structural subunit. May act as a translation initiation factor. Has a role in regulation of cell proliferation in the hematopoietic organs and the imaginal disks of larva. The polypeptide is Small ribosomal subunit protein eS21 (RpS21) (Drosophila simulans (Fruit fly)).